The following is a 95-amino-acid chain: Aspartyl/glutamyl-tRNA(Asn/Gln) amidotransferase subunit C (95 aa).

The protein belongs to the GatC family. In terms of assembly, heterotrimer of A, B and C subunits.

It catalyses the reaction L-glutamyl-tRNA(Gln) + L-glutamine + ATP + H2O = L-glutaminyl-tRNA(Gln) + L-glutamate + ADP + phosphate + H(+). The enzyme catalyses L-aspartyl-tRNA(Asn) + L-glutamine + ATP + H2O = L-asparaginyl-tRNA(Asn) + L-glutamate + ADP + phosphate + 2 H(+). Allows the formation of correctly charged Asn-tRNA(Asn) or Gln-tRNA(Gln) through the transamidation of misacylated Asp-tRNA(Asn) or Glu-tRNA(Gln) in organisms which lack either or both of asparaginyl-tRNA or glutaminyl-tRNA synthetases. The reaction takes place in the presence of glutamine and ATP through an activated phospho-Asp-tRNA(Asn) or phospho-Glu-tRNA(Gln). The protein is Aspartyl/glutamyl-tRNA(Asn/Gln) amidotransferase subunit C of Ruthia magnifica subsp. Calyptogena magnifica.